The following is a 344-amino-acid chain: tRNA N6-adenosine threonylcarbamoyltransferase (344 aa).

Fe cation contacts are provided by histidine 114 and histidine 118. Substrate contacts are provided by residues 136–140 (LVSGG), aspartate 170, glycine 183, aspartate 187, and asparagine 278. Aspartate 306 is a binding site for Fe cation.

This sequence belongs to the KAE1 / TsaD family. The cofactor is Fe(2+).

The protein resides in the cytoplasm. The enzyme catalyses L-threonylcarbamoyladenylate + adenosine(37) in tRNA = N(6)-L-threonylcarbamoyladenosine(37) in tRNA + AMP + H(+). Required for the formation of a threonylcarbamoyl group on adenosine at position 37 (t(6)A37) in tRNAs that read codons beginning with adenine. Is involved in the transfer of the threonylcarbamoyl moiety of threonylcarbamoyl-AMP (TC-AMP) to the N6 group of A37, together with TsaE and TsaB. TsaD likely plays a direct catalytic role in this reaction. This Mycobacteroides abscessus (strain ATCC 19977 / DSM 44196 / CCUG 20993 / CIP 104536 / JCM 13569 / NCTC 13031 / TMC 1543 / L948) (Mycobacterium abscessus) protein is tRNA N6-adenosine threonylcarbamoyltransferase.